The primary structure comprises 587 residues: Formate--tetrahydrofolate ligase (587 aa).

73–80 (TPLGEGKS) serves as a coordination point for ATP.

Belongs to the formate--tetrahydrofolate ligase family.

It catalyses the reaction (6S)-5,6,7,8-tetrahydrofolate + formate + ATP = (6R)-10-formyltetrahydrofolate + ADP + phosphate. It functions in the pathway one-carbon metabolism; tetrahydrofolate interconversion. The chain is Formate--tetrahydrofolate ligase from Syntrophobacter fumaroxidans (strain DSM 10017 / MPOB).